A 514-amino-acid chain; its full sequence is MSKPNNQNQQNNQEQIPEDANELIAQLQAKLEDIVASGKQPYPNTFKRTDYAQDLQTAFEGISKQEIADNDAKGEKTQVNVAGRVMLNRGAFIVIQDMTGRIQLYVARKELDEETLADIKSLDLGDIVGVSGYIGRSGKGDLYVHIEEMQLLTKALRPMPNKFHGLADVEARYRNRHLDLMTNETTRDTFMVRSQVISGIRKFMLNERFMEVETPMMHPIPGGAVARPFVTHHNALDMPLYLRIAPELYLKRLVVGGFEKVFEINRSFRNEGVSTRHNPEFTMIEFYQAYADYHDLMDLTERLFNELATDILGTTEITYQEEDISLKAPFERLSMSNAIAKYAENFDMARINDRDYLAEYASTTLKQQVKDVFGVGKLQTIIFEETAEHQLRQPTFITEYPAETSPLARRSDDNPEITDRFELFVGGRELANGFSELNDPADQAERFLGQVAEKDAGDDEAMHFDAEYIEALSYGLPPTAGEGIGIDRLVMLLTDSASIRDVILFPHMRRKLEG.

Mg(2+) contacts are provided by E422 and E429.

This sequence belongs to the class-II aminoacyl-tRNA synthetase family. As to quaternary structure, homodimer. Requires Mg(2+) as cofactor.

Its subcellular location is the cytoplasm. The enzyme catalyses tRNA(Lys) + L-lysine + ATP = L-lysyl-tRNA(Lys) + AMP + diphosphate. The chain is Lysine--tRNA ligase from Psychrobacter arcticus (strain DSM 17307 / VKM B-2377 / 273-4).